Here is an 85-residue protein sequence, read N- to C-terminus: Exodeoxyribonuclease 7 small subunit (85 aa).

The protein belongs to the XseB family. Heterooligomer composed of large and small subunits.

Its subcellular location is the cytoplasm. It catalyses the reaction Exonucleolytic cleavage in either 5'- to 3'- or 3'- to 5'-direction to yield nucleoside 5'-phosphates.. Bidirectionally degrades single-stranded DNA into large acid-insoluble oligonucleotides, which are then degraded further into small acid-soluble oligonucleotides. In Alkalilimnicola ehrlichii (strain ATCC BAA-1101 / DSM 17681 / MLHE-1), this protein is Exodeoxyribonuclease 7 small subunit.